The sequence spans 31 residues: MVSEAITALKERTGSMLTQIKKLVAAGKLTK.

It belongs to the histone H1/H5 family.

The protein localises to the nucleus. It localises to the chromosome. In terms of biological role, histones H1 are necessary for the condensation of nucleosome chains into higher-order structures. This is Histone H1.3 from Triticum aestivum (Wheat).